The following is a 213-amino-acid chain: High frequency lysogenization protein HflD homolog (213 aa).

A coiled-coil region spans residues 79–126; that stretch reads QGLNAELTRYTLSLMVLERKLSSAKGALDTLGNRINGLQRQLEHFDLQ.

The protein belongs to the HflD family.

The protein localises to the cytoplasm. It localises to the cell inner membrane. This Shigella boydii serotype 18 (strain CDC 3083-94 / BS512) protein is High frequency lysogenization protein HflD homolog.